A 284-amino-acid chain; its full sequence is Tryptophan 2,3-dioxygenase (284 aa).

Substrate-binding positions include 53 to 57 (FIVQH), Tyr115, and Arg119. His242 is a heme binding site. Thr256 contacts substrate.

This sequence belongs to the tryptophan 2,3-dioxygenase family. As to quaternary structure, homotetramer. The cofactor is heme.

It carries out the reaction L-tryptophan + O2 = N-formyl-L-kynurenine. Its pathway is amino-acid degradation; L-tryptophan degradation via kynurenine pathway; L-kynurenine from L-tryptophan: step 1/2. Heme-dependent dioxygenase that catalyzes the oxidative cleavage of the L-tryptophan (L-Trp) pyrrole ring and converts L-tryptophan to N-formyl-L-kynurenine. Catalyzes the oxidative cleavage of the indole moiety. The sequence is that of Tryptophan 2,3-dioxygenase from Bordetella pertussis (strain Tohama I / ATCC BAA-589 / NCTC 13251).